The chain runs to 482 residues: Catalase (482 aa).

Active-site residues include His-53 and Asn-126. Tyr-336 is a binding site for heme.

It belongs to the catalase family. Requires heme as cofactor.

It localises to the periplasm. It catalyses the reaction 2 H2O2 = O2 + 2 H2O. In terms of biological role, decomposes hydrogen peroxide into water and oxygen; serves to protect cells from the toxic effects of hydrogen peroxide. Could protect cells in nodules which have a high potential to produce hydrogen peroxide because of the strong reducing conditions required for nitrogen fixation and the action of several proteins. This is Catalase (katA) from Aliivibrio fischeri (strain ATCC 700601 / ES114) (Vibrio fischeri).